A 190-amino-acid polypeptide reads, in one-letter code: Casparian strip membrane protein 1 (190 aa).

Residues 1–24 are Cytoplasmic-facing; that stretch reads MKAESGSADAKLPLPPPVGRKRRG. The chain crosses the membrane as a helical span at residues 25 to 45; sequence LAILDFLLRLLAIGATLSAAI. Residues 46 to 72 are Extracellular-facing; sequence AMGTNNETLKFFTQFFQFNARFYNLSA. N-linked (GlcNAc...) asparagine glycosylation is found at Asn-51 and Asn-69. The chain crosses the membrane as a helical span at residues 73–93; the sequence is FIYFVIANATVGLYLLLSLPF. Residues 94 to 107 are Cytoplasmic-facing; sequence SIFDIVRPRAAAFR. Residues 108–128 form a helical membrane-spanning segment; that stretch reads VLLIFFDTVMVAVCTSGAAAA. Over 129–157 the chain is Extracellular; the sequence is TAIMYVARRGNTKTNWFSICQQFNSFCDQ. Residues 158–178 form a helical membrane-spanning segment; sequence ATGALGASFAAVVLLILLVLL. Residues 179 to 190 lie on the Cytoplasmic side of the membrane; it reads SASTLHRQRADF.

The protein belongs to the Casparian strip membrane proteins (CASP) family. In terms of assembly, homodimer and heterodimers.

The protein resides in the cell membrane. Its function is as follows. Regulates membrane-cell wall junctions and localized cell wall deposition. Required for establishment of the Casparian strip membrane domain (CSD) and the subsequent formation of Casparian strips, a cell wall modification of the root endodermis that determines an apoplastic barrier between the intraorganismal apoplasm and the extraorganismal apoplasm and prevents lateral diffusion. The sequence is that of Casparian strip membrane protein 1 from Pinus taeda (Loblolly pine).